Consider the following 515-residue polypeptide: MLLIEEKYRSVAQVLLSSGTCSRCVLRFCCVGSPANYRLPCKEVTYELQKYLSHGDPAEENDTPPSKKAKIEEDTSSNEHLGNCEDVNGSQVVRICPLCLGILQQFCEPEFIEKVFVKINSAVYELKDFVLSISLPAQLSVREHSAWLQAKQEMGKHGHSLDKTDIVQLKEAYKWIIHPLLSDQLGIQADSKSLFEVAVVFTHPETDGDCHFLATVCRDCFKPTKNKQSVFTRMAVVKALEKIKEEDFRVQFPFPPSSPETTCEVVDIQCNHSPVFVAGRYNKYSRNLPQTPWIIDGERKIESSVEELITDHLVAAFRSSSFNFSSSGREDVDVRTLGKGRPFAIELLNPHKVQFTGQEIKALQQKINTSDKIKVRDLQIVSREAVAHMKEGEEEKTKCYCALIWIEKMVRNEDLQLLDGLEELTIAQKTPLRVLHRRPLASRSRTIHTMRTEYVDEHHFRLYLKTQAGTYIKEFVHGDFGRTKPNVGSIMETNADILELDVESVDVDWPPSLDD.

Zn(2+)-binding residues include cysteine 21 and cysteine 24. Residues 42 to 85 (KEVTYELQKYLSHGDPAEENDTPPSKKAKIEEDTSSNEHLGNCE) are a coiled coil. A disordered region spans residues 55–82 (GDPAEENDTPPSKKAKIEEDTSSNEHLG). 2 residues coordinate Zn(2+): cysteine 96 and cysteine 99. The segment at 291–304 (TPWIIDGERKIESS) is RNA binding forefinger loop. Aspartate 331 acts as the Nucleophile in catalysis. Positions 428 to 443 (QKTPLRVLHRRPLASR) are RNA binding thumb loop.

The protein belongs to the pseudouridine synthase Pus10 family.

The protein resides in the nucleus. Its subcellular location is the cytoplasm. It localises to the mitochondrion. It carries out the reaction uridine(55) in tRNA = pseudouridine(55) in tRNA. The catalysed reaction is uridine(54) in tRNA = pseudouridine(54) in tRNA. Its function is as follows. Protein with different functions depending on its subcellular location: involved in miRNA processing in the nucleus and acts as a tRNA pseudouridylate synthase in the cytoplasm. In the cytoplasm, acts as a pseudouridylate synthase by catalyzing synthesis of pseudouridine(54) and pseudouridine(55) from uracil-54 and uracil-55, respectively, in the psi GC loop of a subset of tRNAs. tRNA pseudouridylate synthase activity is enhanced by the presence of 1-methyladenosine at position 53-61 of tRNAs. Does not show tRNA pseudouridylate synthase activity in the nucleus. In the nucleus, promotes primary microRNAs (pri-miRNAs) processing independently of its RNA pseudouridylate synthase activity. Binds pri-miRNAs. In Xenopus laevis (African clawed frog), this protein is tRNA pseudouridine synthase Pus10.